A 631-amino-acid chain; its full sequence is tRNA uridine 5-carboxymethylaminomethyl modification enzyme MnmG (631 aa).

An FAD-binding site is contributed by 13 to 18 (GGGHAG). 273-287 (GPRYCPSIEDKVNRF) contributes to the NAD(+) binding site.

The protein belongs to the MnmG family. As to quaternary structure, homodimer. Heterotetramer of two MnmE and two MnmG subunits. FAD serves as cofactor.

The protein localises to the cytoplasm. Its function is as follows. NAD-binding protein involved in the addition of a carboxymethylaminomethyl (cmnm) group at the wobble position (U34) of certain tRNAs, forming tRNA-cmnm(5)s(2)U34. The protein is tRNA uridine 5-carboxymethylaminomethyl modification enzyme MnmG of Chromohalobacter salexigens (strain ATCC BAA-138 / DSM 3043 / CIP 106854 / NCIMB 13768 / 1H11).